Consider the following 279-residue polypeptide: Oxygen-dependent coproporphyrinogen-III oxidase (279 aa).

Ser-102 lines the substrate pocket. The a divalent metal cation site is built by His-106 and His-116. His-116 acts as the Proton donor in catalysis. 118–120 (NTR) provides a ligand contact to substrate. A divalent metal cation-binding residues include His-149 and His-179. Residues 244-279 (YVEFNLLYDRGTKFGLMTDGNVEAILMSLPPEVKFN) are important for dimerization.

The protein belongs to the aerobic coproporphyrinogen-III oxidase family. In terms of assembly, homodimer. The cofactor is a divalent metal cation.

The protein resides in the cytoplasm. It carries out the reaction coproporphyrinogen III + O2 + 2 H(+) = protoporphyrinogen IX + 2 CO2 + 2 H2O. It functions in the pathway porphyrin-containing compound metabolism; protoporphyrin-IX biosynthesis; protoporphyrinogen-IX from coproporphyrinogen-III (O2 route): step 1/1. Involved in the heme biosynthesis. Catalyzes the aerobic oxidative decarboxylation of propionate groups of rings A and B of coproporphyrinogen-III to yield the vinyl groups in protoporphyrinogen-IX. The sequence is that of Oxygen-dependent coproporphyrinogen-III oxidase from Rickettsia conorii (strain ATCC VR-613 / Malish 7).